Here is a 139-residue protein sequence, read N- to C-terminus: Putative nickel-responsive regulator (139 aa).

Ni(2+) contacts are provided by His-79, His-90, His-92, and Cys-98.

It belongs to the transcriptional regulatory CopG/NikR family. Ni(2+) is required as a cofactor.

Its function is as follows. Transcriptional regulator. This is Putative nickel-responsive regulator from Geobacter sp. (strain M21).